Reading from the N-terminus, the 570-residue chain is Protein misato homolog 1 (570 aa).

At S495 the chain carries Phosphoserine.

It belongs to the misato family.

Its subcellular location is the mitochondrion outer membrane. It is found in the cytoplasm. In terms of biological role, involved in the regulation of mitochondrial distribution and morphology. Required for mitochondrial fusion and mitochondrial network formation. This chain is Protein misato homolog 1 (MSTO1), found in Pongo pygmaeus (Bornean orangutan).